The chain runs to 426 residues: Stationary phase-inducible protein CsiE (426 aa).

PRD domains lie at 120–225 (ARNF…DPLR) and 229–336 (QRDR…ENDL).

The protein is Stationary phase-inducible protein CsiE (csiE) of Escherichia coli (strain K12).